The chain runs to 37 residues: GIFTLIKGAAKLIGKTVAKEAGKTGLELMACKITNQC.

A disulfide bridge connects residues Cys31 and Cys37.

Expressed by the skin glands.

It is found in the secreted. Has antibacterial activity against E.coli and S.aureus strains. The sequence is that of Esculentin-2JDb from Odorrana jingdongensis (Jingdong frog).